The chain runs to 182 residues: Nucleoside triphosphate/diphosphate phosphatase (182 aa).

Arg-27 serves as the catalytic Proton donor. Asn-91, Asp-107, Asp-109, Asp-111, Asp-124, and Glu-127 together coordinate Mg(2+).

This sequence belongs to the Ntdp family. It depends on Mg(2+) as a cofactor.

The catalysed reaction is a ribonucleoside 5'-triphosphate + H2O = a ribonucleoside 5'-diphosphate + phosphate + H(+). It catalyses the reaction a ribonucleoside 5'-diphosphate + H2O = a ribonucleoside 5'-phosphate + phosphate + H(+). In terms of biological role, has nucleoside phosphatase activity towards nucleoside triphosphates and nucleoside diphosphates. In Lactiplantibacillus plantarum (strain ATCC BAA-793 / NCIMB 8826 / WCFS1) (Lactobacillus plantarum), this protein is Nucleoside triphosphate/diphosphate phosphatase.